Consider the following 403-residue polypeptide: L-cysteine:1D-myo-inositol 2-amino-2-deoxy-alpha-D-glucopyranoside ligase (403 aa).

Cysteine 43 contributes to the Zn(2+) binding site. Residues 43-46 (CGIT), threonine 58, 81-83 (NVT), and tryptophan 223 each bind L-cysteinyl-5'-AMP. Residues 45–55 (ITPYDATHLGH) carry the 'HIGH' region motif. Cysteine 227 serves as a coordination point for Zn(2+). 245-247 (GAD) is an L-cysteinyl-5'-AMP binding site. Position 252 (histidine 252) interacts with Zn(2+). Valine 278 provides a ligand contact to L-cysteinyl-5'-AMP. The 'KMSKS' region signature appears at 284-288 (KMSKS).

The protein belongs to the class-I aminoacyl-tRNA synthetase family. MshC subfamily. As to quaternary structure, monomer. It depends on Zn(2+) as a cofactor.

The enzyme catalyses 1D-myo-inositol 2-amino-2-deoxy-alpha-D-glucopyranoside + L-cysteine + ATP = 1D-myo-inositol 2-(L-cysteinylamino)-2-deoxy-alpha-D-glucopyranoside + AMP + diphosphate + H(+). Functionally, catalyzes the ATP-dependent condensation of GlcN-Ins and L-cysteine to form L-Cys-GlcN-Ins. The polypeptide is L-cysteine:1D-myo-inositol 2-amino-2-deoxy-alpha-D-glucopyranoside ligase (Acidothermus cellulolyticus (strain ATCC 43068 / DSM 8971 / 11B)).